A 64-amino-acid polypeptide reads, in one-letter code: Large ribosomal subunit protein bL28 (64 aa).

This sequence belongs to the bacterial ribosomal protein bL28 family.

The sequence is that of Large ribosomal subunit protein bL28 from Campylobacter jejuni subsp. doylei (strain ATCC BAA-1458 / RM4099 / 269.97).